The chain runs to 415 residues: Serine hydroxymethyltransferase 1 (415 aa).

(6S)-5,6,7,8-tetrahydrofolate is bound by residues Leu122 and 126–128; that span reads GHL. Lys230 is subject to N6-(pyridoxal phosphate)lysine.

Belongs to the SHMT family. In terms of assembly, homodimer. Pyridoxal 5'-phosphate serves as cofactor.

It is found in the cytoplasm. It catalyses the reaction (6R)-5,10-methylene-5,6,7,8-tetrahydrofolate + glycine + H2O = (6S)-5,6,7,8-tetrahydrofolate + L-serine. The protein operates within one-carbon metabolism; tetrahydrofolate interconversion. Its pathway is amino-acid biosynthesis; glycine biosynthesis; glycine from L-serine: step 1/1. In terms of biological role, catalyzes the reversible interconversion of serine and glycine with tetrahydrofolate (THF) serving as the one-carbon carrier. This reaction serves as the major source of one-carbon groups required for the biosynthesis of purines, thymidylate, methionine, and other important biomolecules. Also exhibits THF-independent aldolase activity toward beta-hydroxyamino acids, producing glycine and aldehydes, via a retro-aldol mechanism. The protein is Serine hydroxymethyltransferase 1 of Ralstonia nicotianae (strain ATCC BAA-1114 / GMI1000) (Ralstonia solanacearum).